We begin with the raw amino-acid sequence, 309 residues long: Ribonuclease Z (309 aa).

Residues H63, H65, D67, H68, H141, D212, and H270 each coordinate Zn(2+). The Proton acceptor role is filled by D67.

It belongs to the RNase Z family. In terms of assembly, homodimer. It depends on Zn(2+) as a cofactor.

It carries out the reaction Endonucleolytic cleavage of RNA, removing extra 3' nucleotides from tRNA precursor, generating 3' termini of tRNAs. A 3'-hydroxy group is left at the tRNA terminus and a 5'-phosphoryl group is left at the trailer molecule.. Its function is as follows. Zinc phosphodiesterase, which displays some tRNA 3'-processing endonuclease activity. Probably involved in tRNA maturation, by removing a 3'-trailer from precursor tRNA. The sequence is that of Ribonuclease Z from Lactobacillus johnsonii (strain CNCM I-12250 / La1 / NCC 533).